Here is an 841-residue protein sequence, read N- to C-terminus: Probable alpha-glucuronidase A (841 aa).

The N-terminal stretch at 1–19 (MLRLPLVLVWSLWASLTVA) is a signal peptide. N-linked (GlcNAc...) asparagine glycosylation is found at Asn-50, Asn-104, Asn-223, Asn-280, Asn-311, Asn-344, Asn-466, Asn-528, Asn-577, Asn-683, Asn-724, and Asn-733.

It belongs to the glycosyl hydrolase 67 family.

It localises to the secreted. The enzyme catalyses an alpha-D-glucuronoside + H2O = D-glucuronate + an alcohol. Alpha-glucuronidase involved in the hydrolysis of xylan, a major structural heterogeneous polysaccharide found in plant biomass representing the second most abundant polysaccharide in the biosphere, after cellulose. Releases 4-O-methylglucuronic acid from xylan. The sequence is that of Probable alpha-glucuronidase A (aguA) from Aspergillus terreus (strain NIH 2624 / FGSC A1156).